The primary structure comprises 105 residues: Large ribosomal subunit protein bL21c (105 aa).

This sequence belongs to the bacterial ribosomal protein bL21 family. As to quaternary structure, part of the 50S ribosomal subunit.

The protein resides in the plastid. It is found in the chloroplast. Its function is as follows. This protein binds to 23S rRNA. This Trieres chinensis (Marine centric diatom) protein is Large ribosomal subunit protein bL21c.